Reading from the N-terminus, the 306-residue chain is Heterogeneous nuclear ribonucleoproteins C1/C2 (306 aa).

Ala-2 carries the N-acetylalanine modification. Glycyl lysine isopeptide (Lys-Gly) (interchain with G-Cter in SUMO2) cross-links involve residues Lys-8, Lys-50, Lys-89, and Lys-94. In terms of domain architecture, RRM spans 16 to 87; that stretch reads SRVFIGNLNT…QVLDINLAAE (72 aa). Phosphoserine occurs at positions 107 and 108. Phosphothreonine is present on Thr-109. 3 positions are modified to phosphoserine: Ser-113, Ser-115, and Ser-121. Disordered regions lie at residues 139–190 and 221–306; these read YPAR…KLKG and QSKQ…EDDS. Residues 155–161 carry the Nuclear localization signal motif; it reads PSKRQRV. 2 positions are modified to phosphoserine: Ser-162 and Ser-166. The segment covering 175–185 has biased composition (low complexity); it reads SKSGQRGSSKS. An N6-acetyllysine; alternate modification is found at Lys-176. Lys-176 participates in a covalent cross-link: Glycyl lysine isopeptide (Lys-Gly) (interchain with G-Cter in SUMO2); alternate. Residues 190-238 are a coiled coil; the sequence is GDDLQAIKKELTQIKQKVDSLLENLEKIEKEQSKQAVEMKNDKSEEEQS. The span at 221-232 shows a compositional bias: basic and acidic residues; it reads QSKQAVEMKNDK. Glycyl lysine isopeptide (Lys-Gly) (interchain with G-Cter in SUMO2) cross-links involve residues Lys-223 and Lys-229. Residue Lys-232 forms a Glycyl lysine isopeptide (Lys-Gly) (interchain with G-Cter in SUMO2); alternate linkage. Lys-232 participates in a covalent cross-link: Glycyl lysine isopeptide (Lys-Gly) (interchain with G-Cter in SUMO1); alternate. Phosphoserine occurs at positions 233, 238, 239, and 241. The segment covering 242-253 has biased composition (basic and acidic residues); sequence VKKDETNVKMES. Glycyl lysine isopeptide (Lys-Gly) (interchain with G-Cter in SUMO2) cross-links involve residues Lys-243 and Lys-244. Lys-250 is covalently cross-linked (Glycyl lysine isopeptide (Lys-Gly) (interchain with G-Cter in SUMO2); alternate). Residue Lys-250 forms a Glycyl lysine isopeptide (Lys-Gly) (interchain with G-Cter in SUMO); alternate linkage. Residues Ser-253 and Ser-260 each carry the phosphoserine modification. Acidic residues predominate over residues 255–276; sequence GGADDSAEEGDLLDDDDNEDRG. The span at 277-287 shows a compositional bias: basic and acidic residues; the sequence is DDQLELIKDDE. Residues 288–306 are compositionally biased toward acidic residues; that stretch reads KEAEEGEDDRDSANGEDDS. Phosphoserine occurs at positions 299 and 306.

The protein belongs to the RRM HNRPC family. RALY subfamily. Tetramer composed of 3 copies of isoform C1 and 1 copy of isoform C2. Assembly of 3 tetramers with bound pre-mRNA gives rise to a 19S complex that interacts with HNRNPA2B1 tetramers. Component of the 40S hnRNP particle. Identified in the spliceosome C complex. Interacts with IGF2BP1. Interacts with DHX9; this interaction is direct, enhanced probably by their concomitant binding to RNA and mediates the attachment to actin filaments. Interacts with PPIA/CYPA. Interacts with YWHAE. In terms of processing, phosphorylated on Ser-260 and Ser-299 in resting cells. Phosphorylated on Ser-253 and on 1 serine residue in the poly-Ser stretch at position 238 in response to hydrogen peroxide. Sumoylated. Sumoylation reduces affinity for mRNA. Post-translationally, ubiquitinated and degraded after nucleo-cytoplasmic transport by YWHAE.

The protein resides in the nucleus. In terms of biological role, binds pre-mRNA and nucleates the assembly of 40S hnRNP particles. Interacts with poly-U tracts in the 3'-UTR or 5'-UTR of mRNA and modulates the stability and the level of translation of bound mRNA molecules. Single HNRNPC tetramers bind 230-240 nucleotides. Trimers of HNRNPC tetramers bind 700 nucleotides. May play a role in the early steps of spliceosome assembly and pre-mRNA splicing. N6-methyladenosine (m6A) has been shown to alter the local structure in mRNAs and long non-coding RNAs (lncRNAs) via a mechanism named 'm(6)A-switch', facilitating binding of HNRNPC, leading to regulation of mRNA splicing. The polypeptide is Heterogeneous nuclear ribonucleoproteins C1/C2 (HNRNPC) (Homo sapiens (Human)).